Here is a 347-residue protein sequence, read N- to C-terminus: S-adenosylmethionine:tRNA ribosyltransferase-isomerase (347 aa).

Belongs to the QueA family. As to quaternary structure, monomer.

It is found in the cytoplasm. The enzyme catalyses 7-aminomethyl-7-carbaguanosine(34) in tRNA + S-adenosyl-L-methionine = epoxyqueuosine(34) in tRNA + adenine + L-methionine + 2 H(+). It functions in the pathway tRNA modification; tRNA-queuosine biosynthesis. Functionally, transfers and isomerizes the ribose moiety from AdoMet to the 7-aminomethyl group of 7-deazaguanine (preQ1-tRNA) to give epoxyqueuosine (oQ-tRNA). The polypeptide is S-adenosylmethionine:tRNA ribosyltransferase-isomerase (Bordetella bronchiseptica (strain ATCC BAA-588 / NCTC 13252 / RB50) (Alcaligenes bronchisepticus)).